The following is an 89-amino-acid chain: MKEMIIWPAYIDLKRTKNEGRKVPKEFAVQNPKLKDIAGKLKKMGLEYSIEHKKSYPKDPWEICGYIKVKADKRTSKLQILKEICKNMG.

It belongs to the SRP19 family. As to quaternary structure, part of the signal recognition particle protein translocation system, which is composed of SRP and FtsY. Archaeal SRP consists of a 7S RNA molecule of 300 nucleotides and two protein subunits: SRP54 and SRP19.

The protein localises to the cytoplasm. Its function is as follows. Involved in targeting and insertion of nascent membrane proteins into the cytoplasmic membrane. Binds directly to 7S RNA and mediates binding of the 54 kDa subunit of the SRP. The chain is Signal recognition particle 19 kDa protein from Methanococcus maripaludis (strain C5 / ATCC BAA-1333).